The chain runs to 189 residues: Interferon alpha-4 (189 aa).

An N-terminal signal peptide occupies residues Met1–Gly23. Cystine bridges form between Cys24–Cys122 and Cys52–Cys162.

This sequence belongs to the alpha/beta interferon family.

It is found in the secreted. In terms of biological role, produced by macrophages, IFN-alpha have antiviral activities. Interferon stimulates the production of two enzymes: a protein kinase and an oligoadenylate synthetase. The sequence is that of Interferon alpha-4 (IFNA4) from Homo sapiens (Human).